A 454-amino-acid chain; its full sequence is MSDNDTIVAQATPPGRGGVGILRISGFKAREVAETVLGKLPKPRYADYLPFKDADGSVLDQGIALWFPGPNSFTGEDVLELQGHGGPVILDLLLKRILTIPGLRIARPGEFSERAFLNDKLDLAQAEAIADLIDASSEQAARSALNSLQGAFSARVNHLVEALTHLRIYVEAAIDFPDEEIDFLSDGKIEAQLNDVIADLDAVRAEARQGSLLREGMKVVIAGRPNAGKSSLLNALAGREAAIVTDIAGTTRDVLREHIHIDGMPLHIIDTAGLREASDEVERIGIERAWQEIEQADRVLFMVDGTTTDAVDPAEIWPEFIARLPAKLPITVVRNKADITGETLGMSEVNGHALIRLSARTGEGVEVLRNHLKQSMGFDTNMEGGFLARRRHLQALEQAAEHLQQGKAQLLGAWAGELLAEELRLAQQNLSEITGEFTSDDLLGRIFSSFCIGK.

(6S)-5-formyl-5,6,7,8-tetrahydrofolate-binding residues include arginine 23, glutamate 80, and lysine 120. One can recognise a TrmE-type G domain in the interval glycine 216–glycine 377. Asparagine 226 provides a ligand contact to K(+). GTP is bound by residues asparagine 226 to serine 231, threonine 245 to threonine 251, aspartate 270 to glycine 273, asparagine 335 to aspartate 338, and serine 358 to arginine 360. Mg(2+) is bound at residue serine 230. 3 residues coordinate K(+): threonine 245, isoleucine 247, and threonine 250. Threonine 251 provides a ligand contact to Mg(2+). (6S)-5-formyl-5,6,7,8-tetrahydrofolate is bound at residue lysine 454.

Belongs to the TRAFAC class TrmE-Era-EngA-EngB-Septin-like GTPase superfamily. TrmE GTPase family. In terms of assembly, homodimer. Heterotetramer of two MnmE and two MnmG subunits. K(+) is required as a cofactor.

Its subcellular location is the cytoplasm. Its function is as follows. Exhibits a very high intrinsic GTPase hydrolysis rate. Involved in the addition of a carboxymethylaminomethyl (cmnm) group at the wobble position (U34) of certain tRNAs, forming tRNA-cmnm(5)s(2)U34. This is tRNA modification GTPase MnmE from Escherichia coli (strain 55989 / EAEC).